A 138-amino-acid chain; its full sequence is Phospholipase A2 group V (138 aa).

A signal peptide spans 1–20 (MKGLLPLAWFLACSVPAVQG). Intrachain disulfides connect Cys-46/Cys-137, Cys-48/Cys-64, Cys-63/Cys-117, Cys-70/Cys-110, Cys-79/Cys-103, and Cys-97/Cys-108. Ca(2+) is bound by residues Tyr-47, Gly-49, and Gly-51. Residue His-67 is part of the active site. Residue Asp-68 participates in Ca(2+) binding. Asp-111 is a catalytic residue.

It belongs to the phospholipase A2 family. The cofactor is Ca(2+). Post-translationally, this enzyme lacks one of the seven disulfide bonds found in similar PLA2 proteins. In terms of tissue distribution, heart, placenta and less abundantly, in lung. Detected in the outer and inner plexiform layers of the retina (at protein level). Expressed in monocytes and macrophages.

Its subcellular location is the secreted. It is found in the cell membrane. The protein resides in the cytoplasmic vesicle. It localises to the phagosome. The protein localises to the recycling endosome. Its subcellular location is the golgi apparatus. It is found in the cis-Golgi network. The protein resides in the trans-Golgi network. The enzyme catalyses a 1,2-diacyl-sn-glycero-3-phosphocholine + H2O = a 1-acyl-sn-glycero-3-phosphocholine + a fatty acid + H(+). It carries out the reaction 1-hexadecanoyl-2-(9Z-octadecenoyl)-sn-glycero-3-phosphocholine + H2O = 1-hexadecanoyl-sn-glycero-3-phosphocholine + (9Z)-octadecenoate + H(+). It catalyses the reaction 1-hexadecanoyl-2-(5Z,8Z,11Z,14Z-eicosatetraenoyl)-sn-glycero-3-phosphocholine + H2O = 1-hexadecanoyl-sn-glycero-3-phosphocholine + (5Z,8Z,11Z,14Z)-eicosatetraenoate + H(+). The catalysed reaction is 1-hexadecanoyl-2-(9Z,12Z-octadecadienoyl)-sn-glycero-3-phosphoethanolamine + H2O = 1-hexadecanoyl-sn-glycero-3-phosphoethanolamine + (9Z,12Z)-octadecadienoate + H(+). The enzyme catalyses 1-hexadecanoyl-2-(5Z,8Z,11Z,14Z-eicosatetraenoyl)-sn-glycero-3-phosphoethanolamine + H2O = 1-hexadecanoyl-sn-glycero-3-phosphoethanolamine + (5Z,8Z,11Z,14Z)-eicosatetraenoate + H(+). It carries out the reaction 1-octadecanoyl-2-(5Z,8Z,11Z,14Z-eicosatetraenoyl)-sn-glycero-3-phospho-(1D-myo-inositol) + H2O = 1-octadecanoyl-sn-glycero-3-phospho-(1D-myo-inositol) + (5Z,8Z,11Z,14Z)-eicosatetraenoate + H(+). It catalyses the reaction 1-hexadecanoyl-2-(9Z-octadecenoyl)-sn-glycero-3-phosphoglycerol + H2O = 1-hexadecanoyl-sn-glycero-3-phosphoglycerol + (9Z)-octadecenoate + H(+). The catalysed reaction is N-hexadecanoyl-1,2-di-(9Z-octadecenoyl)-sn-glycero-3-phosphoethanolamine + H2O = N-hexadecanoyl-1-(9Z-octadecenoyl)-sn-glycero-3-phosphoethanolamine + (9Z)-octadecenoate + H(+). The enzyme catalyses 1'-[1,2-di-(9Z-octadecenoyl)-sn-glycero-3-phospho]-3'-[1-(9Z-octadecenoyl)-sn-glycero-3-phospho]-glycerol + H2O = 1',3'-bis-[1-(9Z-octadecenoyl)-sn-glycero-3-phospho]-glycerol + (9Z)-octadecenoate + H(+). It carries out the reaction 1',3'-bis[1,2-di-(9Z-octadecenoyl)-sn-glycero-3-phospho]-glycerol + H2O = 1'-[1,2-di-(9Z-octadecenoyl)-sn-glycero-3-phospho]-3'-[1-(9Z-octadecenoyl)-sn-glycero-3-phospho]-glycerol + (9Z)-octadecenoate + H(+). Its pathway is lipid metabolism; phospholipid metabolism. The protein operates within lipid metabolism; leukotriene B4 biosynthesis. It functions in the pathway lipid metabolism; leukotriene C4 biosynthesis. Activated by cardiolipin. In terms of biological role, secretory calcium-dependent phospholipase A2 that primarily targets extracellular phospholipids. Hydrolyzes the ester bond of the fatty acyl group attached at sn-2 position of phospholipids (phospholipase A2 activity), preferentially releasing fatty acyl groups with a low degree of unsaturation such as oleoyl (C18:1) and linoleoyl (C18:2) groups. Hydrolyzes low-density lipoprotein (LDL) phospholipids releasing unsaturated fatty acids that drive macrophage polarization toward an M2 phenotype. May act in an autocrine and paracrine manner. Contributes to lipid remodeling of cellular membranes at different subcellular locations and generation of lipid mediators involved in pathogen clearance. Cleaves sn-2 fatty acyl chains of cardiolipin, a major component of the inner membrane of mitochondria and bacterial membranes. Promotes phagocytosis of bacteria in macrophages through production of lysophosphatidylethanolamines. Displays bactericidal activity against Gram-positive bacteria by directly hydrolyzing phospholipids of the bacterial membrane. Promotes phagocytosis and killing of ingested fungi likely through controlling phagosome-lysosome fusion and phagosome maturation. Plays a role in biosynthesis of cysteinyl leukotrienes (CysLTs) in myeloid cells. In eosinophils, triggers perinuclear arachidonate release and LTC4 synthesis in a PLA2G4A-independent way. In neutrophils, amplifies CysLTs biosynthesis initiated by PLA2G4A. Promotes immune complex clearance in macrophages via stimulating synthesis of CysLTs, which act through CYSLTR1 to trigger phagocytosis. May regulate antigen processing in antigen-presenting cells. In pulmonary macrophages regulates IL33 production required for activation of group 2 innate lymphoid cells. May play a role in the biosynthesis of N-acyl ethanolamines that regulate energy metabolism. Hydrolyzes N-acyl phosphatidylethanolamines to N-acyl lysophosphatidylethanolamines, which are further cleaved by a lysophospholipase D to release N-acyl ethanolamines. This is Phospholipase A2 group V (PLA2G5) from Homo sapiens (Human).